The sequence spans 484 residues: Protein nucleotidyltransferase YdiU (484 aa).

ATP is bound by residues G81, G83, R84, K103, D115, G116, R166, and R173. Residue D244 is the Proton acceptor of the active site. Mg(2+) is bound by residues N245 and D254. D254 serves as a coordination point for ATP.

Belongs to the SELO family. The cofactor is Mg(2+). Requires Mn(2+) as cofactor.

The catalysed reaction is L-seryl-[protein] + ATP = 3-O-(5'-adenylyl)-L-seryl-[protein] + diphosphate. It carries out the reaction L-threonyl-[protein] + ATP = 3-O-(5'-adenylyl)-L-threonyl-[protein] + diphosphate. The enzyme catalyses L-tyrosyl-[protein] + ATP = O-(5'-adenylyl)-L-tyrosyl-[protein] + diphosphate. It catalyses the reaction L-histidyl-[protein] + UTP = N(tele)-(5'-uridylyl)-L-histidyl-[protein] + diphosphate. The catalysed reaction is L-seryl-[protein] + UTP = O-(5'-uridylyl)-L-seryl-[protein] + diphosphate. It carries out the reaction L-tyrosyl-[protein] + UTP = O-(5'-uridylyl)-L-tyrosyl-[protein] + diphosphate. In terms of biological role, nucleotidyltransferase involved in the post-translational modification of proteins. It can catalyze the addition of adenosine monophosphate (AMP) or uridine monophosphate (UMP) to a protein, resulting in modifications known as AMPylation and UMPylation. The polypeptide is Protein nucleotidyltransferase YdiU (Shewanella loihica (strain ATCC BAA-1088 / PV-4)).